The following is a 93-amino-acid chain: uncharacterized protein (93 aa).

The tract at residues 26–73 is disordered; the sequence is NRGTIFRPMTRNSGIVGRRGGPVAPAPFRNNVQKPGTRPPGFKPPSGV.

This is an uncharacterized protein from Caenorhabditis elegans.